The sequence spans 596 residues: DNA mismatch repair protein MutL (596 aa).

Belongs to the DNA mismatch repair MutL/HexB family.

Its function is as follows. This protein is involved in the repair of mismatches in DNA. It is required for dam-dependent methyl-directed DNA mismatch repair. May act as a 'molecular matchmaker', a protein that promotes the formation of a stable complex between two or more DNA-binding proteins in an ATP-dependent manner without itself being part of a final effector complex. The protein is DNA mismatch repair protein MutL of Leptospira borgpetersenii serovar Hardjo-bovis (strain L550).